Consider the following 410-residue polypeptide: Translation initiation factor 2 subunit gamma (410 aa).

The 198-residue stretch at 6–203 (QSEINIGMVG…AIEDLMPTPE (198 aa)) folds into the tr-type G domain. The G1 stretch occupies residues 15–22 (GHVDHGKT). Mg(2+)-binding residues include aspartate 18, threonine 22, glycine 43, and serine 45. 18-23 (DHGKTS) is a GTP binding site. The segment at 43-47 (GISIR) is G2. The Zn(2+) site is built by cysteine 58, cysteine 61, cysteine 73, and cysteine 76. Residues 90–93 (DAPG) form a G3 region. Residues 146 to 149 (NKID) and 181 to 183 (SAH) each bind GTP. The G4 stretch occupies residues 146 to 149 (NKID). The interval 181–183 (SAH) is G5.

It belongs to the TRAFAC class translation factor GTPase superfamily. Classic translation factor GTPase family. EIF2G subfamily. In terms of assembly, heterotrimer composed of an alpha, a beta and a gamma chain. Requires Mg(2+) as cofactor.

It catalyses the reaction GTP + H2O = GDP + phosphate + H(+). EIF-2 functions in the early steps of protein synthesis by forming a ternary complex with GTP and initiator tRNA. This chain is Translation initiation factor 2 subunit gamma, found in Methanococcus aeolicus (strain ATCC BAA-1280 / DSM 17508 / OCM 812 / Nankai-3).